A 251-amino-acid chain; its full sequence is CCN family member 5 (251 aa).

The first 23 residues, 1 to 23, serve as a signal peptide directing secretion; that stretch reads MRGNPLIHLLAISFLCILSMVYS. Residues 24–103 enclose the IGFBP N-terminal domain; that stretch reads QLCPAPCACP…EEDDGSCEVN (80 aa). 6 disulfides stabilise this stretch: Cys-26-Cys-50, Cys-30-Cys-52, Cys-32-Cys-53, Cys-39-Cys-56, Cys-64-Cys-78, and Cys-70-Cys-100. The VWFC domain maps to 98 to 164; sequence GSCEVNGRRY…GRCCPEWVCD (67 aa). The TSP type-1 domain occupies 195–239; that stretch reads CPNWSTAWGPCSTTCGLGIATRVSNQNRFCQLEIQRRLCLSRPCL. Asn-197 carries N-linked (GlcNAc...) asparagine glycosylation.

Belongs to the CCN family.

Its subcellular location is the secreted. In terms of biological role, may play an important role in modulating bone turnover. Promotes the adhesion of osteoblast cells and inhibits the binding of fibrinogen to integrin receptors. In addition, inhibits osteocalcin production. This chain is CCN family member 5 (Ccn5), found in Mus musculus (Mouse).